A 692-amino-acid polypeptide reads, in one-letter code: DNA repair protein RAD34 (692 aa).

The disordered stretch occupies residues 1–38; the sequence is MAKRLLESSQNDQANRKNSKIEKKEVSFYEEEETDDSF. Positions 28-38 are enriched in acidic residues; that stretch reads FYEEEETDDSF.

It belongs to the XPC family.

The protein localises to the nucleus. Involved in nucleotide excision repair (NER) of damaged ribosomal DNA (rDNA). Required for the repair of the RNA polymerase I-transcribed strand of rDNA. In Saccharomyces cerevisiae (strain ATCC 204508 / S288c) (Baker's yeast), this protein is DNA repair protein RAD34 (RAD34).